Reading from the N-terminus, the 401-residue chain is Na(+)/H(+) antiporter NhaA 2 (401 aa).

11 consecutive transmembrane segments (helical) span residues Ala13–Pro33, Leu59–Val79, Ile94–Trp114, Gly125–Gly145, Leu154–Phe174, Asp178–Asn198, Val209–Ala229, Trp260–Gly280, Leu292–Ile312, Gly332–Phe352, and Val363–Ala383.

It belongs to the NhaA Na(+)/H(+) (TC 2.A.33) antiporter family.

The protein localises to the cell inner membrane. The catalysed reaction is Na(+)(in) + 2 H(+)(out) = Na(+)(out) + 2 H(+)(in). Its function is as follows. Na(+)/H(+) antiporter that extrudes sodium in exchange for external protons. The polypeptide is Na(+)/H(+) antiporter NhaA 2 (Pseudoalteromonas atlantica (strain T6c / ATCC BAA-1087)).